The primary structure comprises 430 residues: Serine--tRNA ligase (430 aa).

237-239 (TAE) is an L-serine binding site. 268 to 270 (RSE) serves as a coordination point for ATP. An L-serine-binding site is contributed by glutamate 291. 355–358 (EISS) provides a ligand contact to ATP. Serine 391 provides a ligand contact to L-serine.

Belongs to the class-II aminoacyl-tRNA synthetase family. Type-1 seryl-tRNA synthetase subfamily. Homodimer. The tRNA molecule binds across the dimer.

Its subcellular location is the cytoplasm. The enzyme catalyses tRNA(Ser) + L-serine + ATP = L-seryl-tRNA(Ser) + AMP + diphosphate + H(+). It catalyses the reaction tRNA(Sec) + L-serine + ATP = L-seryl-tRNA(Sec) + AMP + diphosphate + H(+). It functions in the pathway aminoacyl-tRNA biosynthesis; selenocysteinyl-tRNA(Sec) biosynthesis; L-seryl-tRNA(Sec) from L-serine and tRNA(Sec): step 1/1. Catalyzes the attachment of serine to tRNA(Ser). Is also able to aminoacylate tRNA(Sec) with serine, to form the misacylated tRNA L-seryl-tRNA(Sec), which will be further converted into selenocysteinyl-tRNA(Sec). The polypeptide is Serine--tRNA ligase (Enterobacter sp. (strain 638)).